The chain runs to 618 residues: Probable arginine--tRNA ligase, cytoplasmic (618 aa).

Interaction with tRNA stretches follow at residues 60-61 (ET) and 104-109 (NGIFLR). Residues 146 to 151 (EFSSPN), histidine 160, tyrosine 359, aspartate 363, and glutamine 387 each bind L-arginine. Positions 149 to 160 (SPNIAKPFHAGH) match the 'HIGH' region motif. An interaction with tRNA region spans residues 496-510 (DTGPYLQYAHSRLSS).

The protein belongs to the class-I aminoacyl-tRNA synthetase family.

It localises to the cytoplasm. It catalyses the reaction tRNA(Arg) + L-arginine + ATP = L-arginyl-tRNA(Arg) + AMP + diphosphate. Forms part of a macromolecular complex that catalyzes the attachment of specific amino acids to cognate tRNAs during protein synthesis. In Schizosaccharomyces pombe (strain 972 / ATCC 24843) (Fission yeast), this protein is Probable arginine--tRNA ligase, cytoplasmic (mrs1).